The primary structure comprises 426 residues: GTPase HflX (426 aa).

In terms of domain architecture, Hflx-type G spans 198 to 365; sequence PTVSLVGYTN…ALTERLSGEV (168 aa). Residues 204 to 211, 229 to 233, 251 to 254, 317 to 320, and 343 to 345 contribute to the GTP site; these read GYTNAGKS, FATLD, DTVG, NKID, and SAQ. Mg(2+) contacts are provided by S211 and T231.

It belongs to the TRAFAC class OBG-HflX-like GTPase superfamily. HflX GTPase family. In terms of assembly, monomer. Associates with the 50S ribosomal subunit. This interaction occurs in the presence of GTP, GDP, ATP or ADP, but not in their absence. The cofactor is Mg(2+).

It is found in the cytoplasm. Its activity is regulated as follows. Intrinsic GTPase activity is very slow and can be stimulated by the presence of 50S ribosomal subunits or 70S ribosomes. GTPase activity is inhibited by ATP. Its function is as follows. GTPase that associates with the 50S ribosomal subunit and may have a role during protein synthesis or ribosome biogenesis. In vitro, also exhibits ATPase activity. This chain is GTPase HflX, found in Escherichia coli (strain K12).